A 431-amino-acid chain; its full sequence is Beta-lactamase hydrolase-like protein (431 aa).

3 residues coordinate Zn(2+): histidine 212, histidine 214, and histidine 286. Aspartate 309 contacts substrate.

This sequence belongs to the metallo-beta-lactamase superfamily. It depends on Zn(2+) as a cofactor.

Functionally, could play a role in cell adherence or biofilm development. This is Beta-lactamase hydrolase-like protein from Xylella fastidiosa (strain Temecula1 / ATCC 700964).